Reading from the N-terminus, the 119-residue chain is Large ribosomal subunit protein bL12 (119 aa).

Belongs to the bacterial ribosomal protein bL12 family. As to quaternary structure, homodimer. Part of the ribosomal stalk of the 50S ribosomal subunit. Forms a multimeric L10(L12)X complex, where L10 forms an elongated spine to which 2 to 4 L12 dimers bind in a sequential fashion. Binds GTP-bound translation factors.

Functionally, forms part of the ribosomal stalk which helps the ribosome interact with GTP-bound translation factors. Is thus essential for accurate translation. The sequence is that of Large ribosomal subunit protein bL12 from Lysinibacillus sphaericus (strain C3-41).